Consider the following 156-residue polypeptide: Ribosome maturation factor RimP (156 aa).

It belongs to the RimP family.

Its subcellular location is the cytoplasm. Required for maturation of 30S ribosomal subunits. In Anoxybacillus flavithermus (strain DSM 21510 / WK1), this protein is Ribosome maturation factor RimP.